The chain runs to 117 residues: Putative cysteine proteinase inhibitor 7 (117 aa).

Positions 1–24 are cleaved as a signal peptide; sequence MTMRTSSLLLAAVAVVAIVAGATA. One can recognise a Cystatin domain in the interval 28–84; sequence GSWEPVDINDPHVQELGRWAVAEEDRGVAAGGLTFERVTDGEKQVVAGVNYRLTLEA. The short motif at 71–75 is the Secondary area of contact element; that stretch reads QVVAG.

This sequence belongs to the cystatin family. Phytocystatin subfamily.

It is found in the secreted. Its function is as follows. Specific inhibitor of cysteine proteinases. Probably involved in the regulation of endogenous processes and in defense against pests and pathogens. In Oryza sativa subsp. japonica (Rice), this protein is Putative cysteine proteinase inhibitor 7.